A 201-amino-acid polypeptide reads, in one-letter code: Glutathione peroxidase 1 (201 aa).

Ser-32 carries the post-translational modification Phosphoserine. Sec-47 is a catalytic residue. Position 47 (Sec-47) is a non-standard amino acid, selenocysteine. N6-acetyllysine; alternate occurs at positions 86 and 112. N6-succinyllysine; alternate is present on residues Lys-86 and Lys-112. At Lys-119 the chain carries N6-acetyllysine. At Lys-146 the chain carries N6-acetyllysine; alternate. Position 146 is an N6-succinyllysine; alternate (Lys-146). A phosphoserine mark is found at Ser-195 and Ser-199.

This sequence belongs to the glutathione peroxidase family. In terms of assembly, homotetramer. Interacts with MIEN1. During periods of oxidative stress, Sec-47 may react with a superoxide radical, irreversibly lose hydroselenide and be converted to dehydroalanine. In terms of tissue distribution, expressed in liver and lung.

The protein resides in the cytoplasm. The protein localises to the mitochondrion. It carries out the reaction 2 glutathione + H2O2 = glutathione disulfide + 2 H2O. The enzyme catalyses a hydroperoxy polyunsaturated fatty acid + 2 glutathione = a hydroxy polyunsaturated fatty acid + glutathione disulfide + H2O. The catalysed reaction is tert-butyl hydroperoxide + 2 glutathione = tert-butanol + glutathione disulfide + H2O. It catalyses the reaction cumene hydroperoxide + 2 glutathione = 2-phenylpropan-2-ol + glutathione disulfide + H2O. It carries out the reaction (13S)-hydroperoxy-(9Z,11E)-octadecadienoate + 2 glutathione = (13S)-hydroxy-(9Z,11E)-octadecadienoate + glutathione disulfide + H2O. The enzyme catalyses (9S)-hydroperoxy-(10E,12Z)-octadecadienoate + 2 glutathione = (9S)-hydroxy-(10E,12Z)-octadecadienoate + glutathione disulfide + H2O. The catalysed reaction is (5S)-hydroperoxy-(6E,8Z,11Z,14Z)-eicosatetraenoate + 2 glutathione = (5S)-hydroxy-(6E,8Z,11Z,14Z)-eicosatetraenoate + glutathione disulfide + H2O. It catalyses the reaction (12S)-hydroperoxy-(5Z,8Z,10E,14Z)-eicosatetraenoate + 2 glutathione = (12S)-hydroxy-(5Z,8Z,10E,14Z)-eicosatetraenoate + glutathione disulfide + H2O. It carries out the reaction (12R)-hydroperoxy-(5Z,8Z,10E,14Z)-eicosatetraenoate + 2 glutathione = (12R)-hydroxy-(5Z,8Z,10E,14Z)-eicosatetraenoate + glutathione disulfide + H2O. The enzyme catalyses (15S)-hydroperoxy-(5Z,8Z,11Z,13E)-eicosatetraenoate + 2 glutathione = (15S)-hydroxy-(5Z,8Z,11Z,13E)-eicosatetraenoate + glutathione disulfide + H2O. The catalysed reaction is (5S)-hydroperoxy-(6E,8Z,11Z,14Z,17Z)-eicosapentaenoate + 2 glutathione = (5S)-hydroxy-(6E,8Z,11Z,14Z,17Z)-eicosapentaenoate + glutathione disulfide + H2O. It catalyses the reaction (12S)-hydroperoxy-(5Z,8Z,10E,14Z,17Z)-eicosapentaenoate + 2 glutathione = (12S)-hydroxy-(5Z,8Z,10E,14Z,17Z)-eicosapentaenoate + glutathione disulfide + H2O. It carries out the reaction (15S)-hydroperoxy-(5Z,8Z,11Z,13E,17Z)-eicosapentaenoate + 2 glutathione = (15S)-hydroxy-(5Z,8Z,11Z,13E,17Z)-eicosapentaenoate + glutathione disulfide + H2O. The enzyme catalyses (15S)-hydroperoxy-(11Z,13E)-eicosadienoate + 2 glutathione = (15S)-hydroxy-(11Z,13E)-eicosadienoate + glutathione disulfide + H2O. The catalysed reaction is (17S)-hydroperoxy-(4Z,7Z,10Z,13Z,15E,19Z)-docosahexaenoate + 2 glutathione = (17S)-hydroxy-(4Z,7Z,10Z,13Z,15E,19Z)-docosahexaenoate + glutathione disulfide + H2O. Catalyzes the reduction of hydroperoxides in a glutathione-dependent manner thus regulating cellular redox homeostasis. Can reduce small soluble hydroperoxides such as H2O2, cumene hydroperoxide and tert-butyl hydroperoxide, as well as several fatty acid-derived hydroperoxides. In platelets catalyzes the reduction of 12-hydroperoxyeicosatetraenoic acid, the primary product of the arachidonate 12-lipoxygenase pathway. The protein is Glutathione peroxidase 1 of Rattus norvegicus (Rat).